We begin with the raw amino-acid sequence, 505 residues long: 2-isopropylmalate synthase (505 aa).

In terms of domain architecture, Pyruvate carboxyltransferase spans 5–269 (IKIFDTTLRD…ETGIHTEYLY (265 aa)). Mn(2+) contacts are provided by Asp14, His204, His206, and Asn240. The tract at residues 393–505 (SLLYFHTFTG…AVNRFELRKR (113 aa)) is regulatory domain.

It belongs to the alpha-IPM synthase/homocitrate synthase family. LeuA type 1 subfamily. As to quaternary structure, homodimer. Mn(2+) is required as a cofactor.

The protein resides in the cytoplasm. It carries out the reaction 3-methyl-2-oxobutanoate + acetyl-CoA + H2O = (2S)-2-isopropylmalate + CoA + H(+). The protein operates within amino-acid biosynthesis; L-leucine biosynthesis; L-leucine from 3-methyl-2-oxobutanoate: step 1/4. Catalyzes the condensation of the acetyl group of acetyl-CoA with 3-methyl-2-oxobutanoate (2-ketoisovalerate) to form 3-carboxy-3-hydroxy-4-methylpentanoate (2-isopropylmalate). This is 2-isopropylmalate synthase from Sediminispirochaeta smaragdinae (strain DSM 11293 / JCM 15392 / SEBR 4228) (Spirochaeta smaragdinae).